Consider the following 151-residue polypeptide: MSKELIVSKIENGTVIDHIPAGRALAVLRVLGITGKEGARVALVMNVESKKLGRKDIVKIEGRELTPEEVNIISAVAPTATINIIRNFEVVRKFNVTPPEVIRGRFKCKNPTCITNAPREPVEPTFYLVRREPPLFVCAYCGRYHELGDLV.

Zn(2+) is bound by residues C108, C113, C138, and C141.

The protein belongs to the PyrI family. In terms of assembly, contains catalytic and regulatory chains. The cofactor is Zn(2+).

Its function is as follows. Involved in allosteric regulation of aspartate carbamoyltransferase. The protein is Aspartate carbamoyltransferase regulatory chain of Pyrobaculum arsenaticum (strain DSM 13514 / JCM 11321 / PZ6).